The following is a 336-amino-acid chain: NmrA-like family domain-containing oxidoreductase FrzB (336 aa).

Lys-135 serves as a coordination point for NADP(+).

This sequence belongs to the NmrA-type oxidoreductase family.

It carries out the reaction 4-{[(2S,5S)-5-[(4-hydroxyphenyl)methyl]-2,5-dihydropyrazin-2-yl]methyl}phenol + 2 NADPH + 2 H(+) = (S,S)-2,5-di-(p-hydroxybenzyl)piperazine + 2 NADP(+). It participates in secondary metabolite biosynthesis. NmrA-like family domain-containing oxidoreductase; part of the gene cluster that mediates the biosynthesis of the alkaloid (-)-FR901483, a potent immunosuppressant that shows efficacy in animal models and a probable inhibitor of purine nucleotide biosynthesis by targeting phosphoribosylpyrophosphate amidotransferase (PPAT). Within the pathway, FrzB catalyzes the reduction of 4-{[(2S,5S)-5-[(4-hydroxyphenyl)methyl]-2,5-dihydropyrazin-2-yl]methyl}phenol to produce the (S,S)-dityrosyl-piperazine intermediate. The biosynthesis of (-)-FR901483 starts with the condensation of two L-tyrosines to yield (S,S)-dityrosyl-piperazine. This process occurs in 3 steps with the non-canonical nonribosomal peptide synthetase FrzA catalyzing the reduction of L-tyrosine into L-tyrosinal, the spontaneous condensation of 2 L-tyrosinal units, and the subsequent reduction by the NmrA-like family domain-containing oxidoreductase FrzB. The cytochrome P450 monooxygenase FrzC then performs coupling between N10 and C1' to morph the piperazine into a 1,4-diazabicyclo[3.2.1]octane spiro-fused to a 2,5-cyclohexadienone. The dienone portion is further reduced to cyclohexanone by the flavin-dependent reductase FrzD. The methyltranserases (MTs) FrzE and FrzF are then involved in the methylation at the C10' amine and the C4 phenolic oxygen, respectively. The order of the two MTs appear to be interchangeable. Cleavage of the C9-N10' bond by the dioxygenase FrzG then leads to formation of a conjugated iminium. In addition to the oxidation of C9, an additional dehydrogenation between C7 and C8 can occur to give a likely shunt product. The next biosynthetic step is the intramolecular aldol condensation catalyzed by the newly identified aldolase FrzH to yield an aza-tricyclic product with the formation of a C9-C3' bond. The short-chain dehydrogenase/reductase FrzI then produces dephospho-(-)-FR901483 that is phosphorylated at C4'-OH into (-)-FR901483 by the phosphotransferase FrzJ. In Cladobotryum sp, this protein is NmrA-like family domain-containing oxidoreductase FrzB.